The sequence spans 89 residues: Putative regulatory protein CLH_1161 (89 aa).

The protein belongs to the RemA family.

The chain is Putative regulatory protein CLH_1161 from Clostridium botulinum (strain Alaska E43 / Type E3).